Here is a 290-residue protein sequence, read N- to C-terminus: MYG1 protein CPn_0489/CP_0265/CPj0489/CpB0509 (290 aa).

Belongs to the MYG1 family.

The polypeptide is MYG1 protein CPn_0489/CP_0265/CPj0489/CpB0509 (Chlamydia pneumoniae (Chlamydophila pneumoniae)).